Reading from the N-terminus, the 551-residue chain is Solute carrier family 22 member 4 (551 aa).

Over 1–20 (MRDYDEAIAFLGEWGPFQRL) the chain is Cytoplasmic. The chain crosses the membrane as a helical span at residues 21–41 (IFFLLSASIIPNGFNGMSVVF). Residues 42 to 141 (LAGTPEHRCR…WNLVCEDNWK (100 aa)) are Extracellular-facing. N-linked (GlcNAc...) asparagine glycosylation is found at Asn-57, Asn-64, and Asn-91. Residues 142 to 162 (VPLTTSLFFVGVLLGSFVSGQ) traverse the membrane as a helical segment. Residues 163 to 171 (LSDRFGRKN) lie on the Cytoplasmic side of the membrane. A helical membrane pass occupies residues 172-192 (VLFATMAVQTGFSFLQIFSIS). Residues 193–197 (WEMFT) are Extracellular-facing. The chain crosses the membrane as a helical span at residues 198–218 (VLFLIVGMGQISNYVVAFILG). 218 to 225 (GTEILGKS) contributes to the ATP binding site. Topologically, residues 219–232 (TEILGKSVRIIFST) are cytoplasmic. Residues 233–253 (LGVCTFFAVGYMLLPLFAYFI) form a helical membrane-spanning segment. Over 254–257 (RDWR) the chain is Extracellular. A helical membrane pass occupies residues 258 to 278 (MLLLALTVPGVLCVPLWWFIP). Residues 279–337 (ESPRWLISQRRFREAEDIIQKAAKMNNIAVPAVIFDSVEELNPLKQQKAFILDLFRTWN) lie on the Cytoplasmic side of the membrane. The chain crosses the membrane as a helical span at residues 338-358 (IAIMTIMSLLLWMLTSVGYFA). At 359-371 (LSLDTPNLHGDAY) the chain is on the extracellular side. A helical transmembrane segment spans residues 372-392 (LNCFLSALIEIPAYITAWLLL). Residues 393–399 (RTLPRRY) are Cytoplasmic-facing. The chain crosses the membrane as a helical span at residues 400 to 420 (IIAAVLFWGGGVLLFIQLVPV). The Extracellular portion of the chain corresponds to 421-426 (DYYFLS). Residues 427–447 (IGLVMLGKFGITSAFSMLYVF) form a helical membrane-spanning segment. Topologically, residues 448-460 (TAELYPTMVRNMA) are cytoplasmic. Residues 461–481 (VGVTSMASRVGSIIAPYFVYL) traverse the membrane as a helical segment. Over 482–486 (GAYNR) the chain is Extracellular. The helical transmembrane segment at 487 to 507 (MLPYIVMGSLTVLIGILTLFF) threads the bilayer. The Cytoplasmic segment spans residues 508 to 551 (PESLGMTLPETLEQMQKVKWFRSGKKTRDSMETEENPKVLITAF).

This sequence belongs to the major facilitator (TC 2.A.1) superfamily. Organic cation transporter (TC 2.A.1.19) family. In terms of assembly, interacts with PDZK1.

The protein localises to the apical cell membrane. The protein resides in the basal cell membrane. Its subcellular location is the mitochondrion membrane. The catalysed reaction is ergothioneine(out) + Na(+)(out) = ergothioneine(in) + Na(+)(in). It catalyses the reaction acetylcholine(in) = acetylcholine(out). It carries out the reaction (R)-carnitine(out) + Na(+)(out) = (R)-carnitine(in) + Na(+)(in). The enzyme catalyses glycine betaine(out) + Na(+)(out) = glycine betaine(in) + Na(+)(in). Its activity is regulated as follows. Allosterically activated by intracellular ATP. Its function is as follows. Transporter that mediates the transport of endogenous and microbial zwitterions and organic cations. Functions as a Na(+)-dependent and pH-dependent high affinity microbial symporter of potent food-derived antioxidant ergothioeine. Transports one sodium ion with one ergothioeine molecule. Involved in the absorption of ergothioneine from the luminal/apical side of the small intestine and renal tubular cells, and into non-parenchymal liver cells, thereby contributing to maintain steady-state ergothioneine level in the body. Also mediates the bidirectional transport of acetycholine, although the exact transport mechanism has not been fully identified yet. Most likely exports anti-inflammatory acetylcholine in non-neuronal tissues, thereby contributing to the non-neuronal cholinergic system. Displays a general physiological role linked to better survival by controlling inflammation and oxidative stress, which may be related to ergothioneine and acetycholine transports. May also function as a low-affinity Na(+)-dependent transporter of L-carnitine through the mitochondrial membrane, thereby maintaining intracellular carnitine homeostasis. May contribute to regulate the transport of cationic compounds in testis across the blood-testis-barrier. The chain is Solute carrier family 22 member 4 (SLC22A4) from Papio anubis (Olive baboon).